We begin with the raw amino-acid sequence, 71 residues long: Calcium dodecin (71 aa).

Ca(2+) is bound at residue glutamate 18.

This sequence belongs to the dodecin family. Homododecamer; 12 subunits assemble to form a hollow sphere with a diameter of about 75 Angstroms. Calcium ions are bound at the interface between three subunits.

Functionally, binds calcium ions. May play a role in sequestering additional small ligands. This is Calcium dodecin (secE2) from Mycobacterium tuberculosis (strain ATCC 25618 / H37Rv).